A 208-amino-acid polypeptide reads, in one-letter code: Sodium/potassium-transporting ATPase subunit beta-1-interacting protein 2 (208 aa).

4 consecutive transmembrane segments (helical) span residues 1 to 23, 35 to 55, 64 to 84, and 148 to 168; these read MGYC…CVLE, APIL…FGTI, GYAV…CFYL, and VAHS…ACYV.

Belongs to the NKAIN family. In terms of assembly, interacts with ATP1B1. Detected in the brain only and specifically in neurons; expressed in multiple regions such as cerebral cortex, thalamus, cerebellum, olfactory bulb and brainstem, but not in the hippocampus.

Its subcellular location is the cell membrane. In Mus musculus (Mouse), this protein is Sodium/potassium-transporting ATPase subunit beta-1-interacting protein 2 (Nkain2).